Consider the following 569-residue polypeptide: BTB/POZ domain-containing protein At3g50840 (569 aa).

A BTB domain is found at 18–87 (SDIEIEVDDI…SYGFKVDISV (70 aa)). Residues 194–459 (ELWFEDLTEL…VQVLFLEQLQ (266 aa)) form the NPH3 domain. Positions 240 to 259 (ISRSSSASSSSSSSSTTIAS) are enriched in low complexity. Residues 240–261 (ISRSSSASSSSSSSSTTIASEN) are disordered. A Phosphotyrosine modification is found at Tyr-400.

It belongs to the NPH3 family.

It functions in the pathway protein modification; protein ubiquitination. In terms of biological role, may act as a substrate-specific adapter of an E3 ubiquitin-protein ligase complex (CUL3-RBX1-BTB) which mediates the ubiquitination and subsequent proteasomal degradation of target proteins. This Arabidopsis thaliana (Mouse-ear cress) protein is BTB/POZ domain-containing protein At3g50840.